Here is a 374-residue protein sequence, read N- to C-terminus: MDKGIILLAAGGTGGHLFPAEALAHELKATGYSVHLVTDSRAERFTGKFPADEIHVVPSATIGSKNPVKLARSVWKLWTGLRAARRLIARLKPRAVVGFGGYPTVPPLLAATGMGIPSIIHEQNAVMGRANKMLASRVKAVAGGFLPEGTGAFAAKTVATGNPVRPAVLKAAGVPYAPAAGDAPFHLVVFGGSQGAQFFSKAVPQAVCRLDDALRQRLKVTQQARPEDREGVIAVYEKLGVPAEVSPFFTDMAGRIASAQLLICRSGASTVSEISVIGRPAILVPYPYALDHDQAANAAALAAKGGARVIAQVELSAERLAGILADAMSNPDALAQMAAGARQTGKPDAARLLALLVEAIASGSTVAKFKETRS.

Residues 13 to 15 (TGG), N124, R165, S193, and Q294 contribute to the UDP-N-acetyl-alpha-D-glucosamine site.

The protein belongs to the glycosyltransferase 28 family. MurG subfamily.

The protein localises to the cell inner membrane. It catalyses the reaction di-trans,octa-cis-undecaprenyl diphospho-N-acetyl-alpha-D-muramoyl-L-alanyl-D-glutamyl-meso-2,6-diaminopimeloyl-D-alanyl-D-alanine + UDP-N-acetyl-alpha-D-glucosamine = di-trans,octa-cis-undecaprenyl diphospho-[N-acetyl-alpha-D-glucosaminyl-(1-&gt;4)]-N-acetyl-alpha-D-muramoyl-L-alanyl-D-glutamyl-meso-2,6-diaminopimeloyl-D-alanyl-D-alanine + UDP + H(+). Its pathway is cell wall biogenesis; peptidoglycan biosynthesis. Functionally, cell wall formation. Catalyzes the transfer of a GlcNAc subunit on undecaprenyl-pyrophosphoryl-MurNAc-pentapeptide (lipid intermediate I) to form undecaprenyl-pyrophosphoryl-MurNAc-(pentapeptide)GlcNAc (lipid intermediate II). The protein is UDP-N-acetylglucosamine--N-acetylmuramyl-(pentapeptide) pyrophosphoryl-undecaprenol N-acetylglucosamine transferase of Rhizobium meliloti (strain 1021) (Ensifer meliloti).